The following is a 122-amino-acid chain: MIQQESRLKVADNTGAKEILCIRVLGGSSRRYAGIGDIIVATVKDAIPGGTVKRGDVVKAVVVRTVKERRRPDGSYIKFDENAAVIIKADNDPRGTRIFGPVGRELRDKKFMKIVSLAPEVL.

The protein belongs to the universal ribosomal protein uL14 family. Part of the 50S ribosomal subunit. Forms a cluster with proteins L3 and L19. In the 70S ribosome, L14 and L19 interact and together make contacts with the 16S rRNA in bridges B5 and B8.

Functionally, binds to 23S rRNA. Forms part of two intersubunit bridges in the 70S ribosome. The chain is Large ribosomal subunit protein uL14 from Mycobacteroides abscessus (strain ATCC 19977 / DSM 44196 / CCUG 20993 / CIP 104536 / JCM 13569 / NCTC 13031 / TMC 1543 / L948) (Mycobacterium abscessus).